A 218-amino-acid polypeptide reads, in one-letter code: Probable 3-keto-L-gulonate-6-phosphate decarboxylase (218 aa).

Aspartate 11 lines the substrate pocket. Mg(2+)-binding residues include glutamate 33 and aspartate 62. Arginine 194 is a binding site for substrate.

Belongs to the HPS/KGPDC family. KGPDC subfamily. Mg(2+) serves as cofactor.

It carries out the reaction 3-dehydro-L-gulonate 6-phosphate + H(+) = L-xylulose 5-phosphate + CO2. It functions in the pathway cofactor degradation; L-ascorbate degradation; D-xylulose 5-phosphate from L-ascorbate: step 2/4. Functionally, catalyzes the decarboxylation of 3-keto-L-gulonate-6-P into L-xylulose-5-P. Is involved in the anaerobic L-ascorbate utilization. The protein is Probable 3-keto-L-gulonate-6-phosphate decarboxylase (ulaD) of Mycoplasma pneumoniae (strain ATCC 29342 / M129 / Subtype 1) (Mycoplasmoides pneumoniae).